Here is a 423-residue protein sequence, read N- to C-terminus: Mannose-6-phosphate isomerase (423 aa).

Ala2 bears the N-acetylalanine mark. Ser102 and Ser108 each carry phosphoserine. Gln110, His112, Glu137, and His276 together coordinate Zn(2+). Arg295 is a catalytic residue.

The protein belongs to the mannose-6-phosphate isomerase type 1 family. Zn(2+) is required as a cofactor.

Its subcellular location is the cytoplasm. It carries out the reaction D-mannose 6-phosphate = D-fructose 6-phosphate. It participates in nucleotide-sugar biosynthesis; GDP-alpha-D-mannose biosynthesis; alpha-D-mannose 1-phosphate from D-fructose 6-phosphate: step 1/2. Functionally, isomerase that catalyzes the interconversion of fructose-6-P and mannose-6-P and has a critical role in the supply of D-mannose derivatives required for many eukaryotic glycosylation reactions. The polypeptide is Mannose-6-phosphate isomerase (MPI) (Bos taurus (Bovine)).